A 217-amino-acid chain; its full sequence is KH domain-containing protein 3 (217 aa).

Residues 1–40 are involved in RNA binding; that stretch reads MDAPRRFPTLVQLMQPKAMPVEVLGHLPKRFSWFHSEFLK. Positions 40–103 constitute a KH; atypical domain; sequence KNPKVVRLEV…SYQEDTIKMI (64 aa). The interval 129–217 is disordered; it reads QKAETQRSSI…EDARDPVTRL (89 aa). A compositionally biased stretch (basic and acidic residues) spans 138-155; the sequence is IEVREAGTQRSVEVREAG. Phosphothreonine; by ATM occurs at positions 145 and 156. 2 stretches are compositionally biased toward polar residues: residues 156 to 170 and 177 to 194; these read TQRSVEVQEVGTQGS and AGTQQSLQAANKSGTQRS. S182 is modified (phosphoserine). Residues 205–217 show a composition bias toward basic and acidic residues; that stretch reads RFREDARDPVTRL.

The protein belongs to the KHDC1 family. Component of the subcortical maternal complex (SCMC), at least composed of NLRP5, KHDC3L, OOEP, and TLE6 isoform 1. Within the complex, interacts with NLRP5, KHDC3L and TLE6 isoform 1. The SCMC may facilitate translocation of its components between the nuclear and cytoplasmic compartments. Forms a scaffold complex with OOEP/FLOPED, and interacts with BLM and TRIM25 at DNA replication forks. Interacts with PARP1; the interaction is increased following the formation of DNA double-strand breaks. Interacts with NUMA1. Expression appears to be maximal in germinal vesicle oocytes, it tails off through metaphase II oocytes and is undetectable following the completion of the oocyte to embryo transition.

The protein localises to the cytoplasm. The protein resides in the cell cortex. It localises to the nucleus. Its subcellular location is the mitochondrion. It is found in the cytoskeleton. The protein localises to the microtubule organizing center. The protein resides in the centrosome. It localises to the chromosome. In terms of biological role, component of the subcortical maternal complex (SCMC), a multiprotein complex that plays a key role in early embryonic development. The SCMC complex is a structural constituent of cytoplasmic lattices, which consist in fibrous structures found in the cytoplasm of oocytes and preimplantation embryos. They are required to store maternal proteins critical for embryonic development, such as proteins that control epigenetic reprogramming of the preimplantation embryo, and prevent their degradation or activation. KHDC3 ensures proper spindle assembly by regulating the localization of AURKA via RHOA signaling and of PLK1 via a RHOA-independent process. Required for the localization of MAD2L1 to kinetochores to enable spindle assembly checkpoint function. As part of the OOEP-KHDC3 scaffold, recruits BLM and TRIM25 to DNA replication forks, thereby promoting the ubiquitination of BLM by TRIM25, enhancing BLM retainment at replication forks and therefore promoting stalled replication fork restart. Regulates homologous recombination-mediated DNA repair via recruitment of RAD51 to sites of DNA double-strand breaks, and sustainment of PARP1 activity, which in turn modulates downstream ATM or ATR activation. Activation of ATM or ATR in response to DNA double-strand breaks may be cell-type specific. Its role in DNA double-strand break repair is independent of its role in restarting stalled replication forks. Promotes neural stem cell neurogenesis and neuronal differentiation in the hippocampus. May regulate normal development of learning, memory and anxiety. Capable of binding RNA. In Homo sapiens (Human), this protein is KH domain-containing protein 3.